The sequence spans 185 residues: Pyridoxal 5'-phosphate synthase subunit PdxT (185 aa).

46–48 (GES) lines the L-glutamine pocket. Catalysis depends on cysteine 78, which acts as the Nucleophile. L-glutamine-binding positions include arginine 106 and 132-133 (IR). Catalysis depends on charge relay system residues histidine 168 and glutamate 170.

This sequence belongs to the glutaminase PdxT/SNO family. As to quaternary structure, in the presence of PdxS, forms a dodecamer of heterodimers. Only shows activity in the heterodimer.

The catalysed reaction is aldehydo-D-ribose 5-phosphate + D-glyceraldehyde 3-phosphate + L-glutamine = pyridoxal 5'-phosphate + L-glutamate + phosphate + 3 H2O + H(+). The enzyme catalyses L-glutamine + H2O = L-glutamate + NH4(+). It participates in cofactor biosynthesis; pyridoxal 5'-phosphate biosynthesis. Its function is as follows. Catalyzes the hydrolysis of glutamine to glutamate and ammonia as part of the biosynthesis of pyridoxal 5'-phosphate. The resulting ammonia molecule is channeled to the active site of PdxS. The chain is Pyridoxal 5'-phosphate synthase subunit PdxT from Corynebacterium diphtheriae (strain ATCC 700971 / NCTC 13129 / Biotype gravis).